The following is a 462-amino-acid chain: Ribosomal protein uS12 methylthiotransferase RimO (462 aa).

In terms of domain architecture, MTTase N-terminal spans 10–125 (PRIGMVSLGC…VLDAVHRNLP (116 aa)). [4Fe-4S] cluster contacts are provided by C19, C55, C84, C160, C164, and C167. The Radical SAM core domain occupies 146–388 (LTPRHYAYLK…AVAEALSSAK (243 aa)). Residues 390-462 (QRRVGATMQV…RGHDLLAQPI (73 aa)) form the TRAM domain.

It belongs to the methylthiotransferase family. RimO subfamily. The cofactor is [4Fe-4S] cluster.

The protein resides in the cytoplasm. It carries out the reaction L-aspartate(89)-[ribosomal protein uS12]-hydrogen + (sulfur carrier)-SH + AH2 + 2 S-adenosyl-L-methionine = 3-methylsulfanyl-L-aspartate(89)-[ribosomal protein uS12]-hydrogen + (sulfur carrier)-H + 5'-deoxyadenosine + L-methionine + A + S-adenosyl-L-homocysteine + 2 H(+). Functionally, catalyzes the methylthiolation of an aspartic acid residue of ribosomal protein uS12. The sequence is that of Ribosomal protein uS12 methylthiotransferase RimO from Verminephrobacter eiseniae (strain EF01-2).